The primary structure comprises 240 residues: Protein GUCD1 (240 aa).

This Homo sapiens (Human) protein is Protein GUCD1 (GUCD1).